The chain runs to 428 residues: Ribulose bisphosphate carboxylase (428 aa).

The Proton acceptor role is filled by K151. K153 is a substrate binding site. Positions 177, 179, and 180 each coordinate Mg(2+). K177 carries the N6-carboxylysine modification. The Proton acceptor role is filled by H270. Residues R271, H303, 354–356, and 376–379 contribute to the substrate site; these read SGG and QFGG.

It belongs to the RuBisCO large chain family. Type III subfamily. Homodimer. In contrast to form I RuBisCO, the form III RuBisCO is composed solely of large subunits. Requires Mg(2+) as cofactor.

The enzyme catalyses 2 (2R)-3-phosphoglycerate + 2 H(+) = D-ribulose 1,5-bisphosphate + CO2 + H2O. The catalysed reaction is D-ribulose 1,5-bisphosphate + O2 = 2-phosphoglycolate + (2R)-3-phosphoglycerate + 2 H(+). Reversibly inhibited by O(2). In terms of biological role, catalyzes the addition of molecular CO(2) and H(2)O to ribulose 1,5-bisphosphate (RuBP), generating two molecules of 3-phosphoglycerate (3-PGA). Functions in an archaeal AMP degradation pathway, together with AMP phosphorylase and R15P isomerase. In Methanosarcina acetivorans (strain ATCC 35395 / DSM 2834 / JCM 12185 / C2A), this protein is Ribulose bisphosphate carboxylase.